Consider the following 434-residue polypeptide: D-inositol 3-phosphate glycosyltransferase (434 aa).

His19 is a binding site for 1D-myo-inositol 3-phosphate. UDP-N-acetyl-alpha-D-glucosamine-binding positions include 25-26 (QP) and Gly33. Residues 30–35 (DAGGMN), Lys88, Tyr121, Thr145, and Arg165 each bind 1D-myo-inositol 3-phosphate. Residues Arg239, Lys244, and Gln297 each coordinate UDP-N-acetyl-alpha-D-glucosamine. The Mg(2+) site is built by Tyr306, Arg307, and Ala309. UDP-N-acetyl-alpha-D-glucosamine contacts are provided by Glu319 and Glu327. Thr333 lines the Mg(2+) pocket. Residues 414-434 (HPRPAARRSGRRFSMRRGVRT) are disordered.

This sequence belongs to the glycosyltransferase group 1 family. MshA subfamily. In terms of assembly, homodimer.

The catalysed reaction is 1D-myo-inositol 3-phosphate + UDP-N-acetyl-alpha-D-glucosamine = 1D-myo-inositol 2-acetamido-2-deoxy-alpha-D-glucopyranoside 3-phosphate + UDP + H(+). In terms of biological role, catalyzes the transfer of a N-acetyl-glucosamine moiety to 1D-myo-inositol 3-phosphate to produce 1D-myo-inositol 2-acetamido-2-deoxy-glucopyranoside 3-phosphate in the mycothiol biosynthesis pathway. The sequence is that of D-inositol 3-phosphate glycosyltransferase (mshA) from Mycolicibacterium smegmatis (strain ATCC 700084 / mc(2)155) (Mycobacterium smegmatis).